Consider the following 257-residue polypeptide: NAD kinase (257 aa).

Asp46 serves as the catalytic Proton acceptor. Residues 46–47 (DG), 116–117 (NE), Asp146, Ala154, 157–162 (TAYNLS), and Asn218 contribute to the NAD(+) site.

Belongs to the NAD kinase family. It depends on a divalent metal cation as a cofactor.

It is found in the cytoplasm. The enzyme catalyses NAD(+) + ATP = ADP + NADP(+) + H(+). In terms of biological role, involved in the regulation of the intracellular balance of NAD and NADP, and is a key enzyme in the biosynthesis of NADP. Catalyzes specifically the phosphorylation on 2'-hydroxyl of the adenosine moiety of NAD to yield NADP. In Brucella suis biovar 1 (strain 1330), this protein is NAD kinase.